The primary structure comprises 362 residues: S-adenosylmethionine decarboxylase proenzyme (362 aa).

Catalysis depends on residues glutamate 11 and glutamate 14. The active-site Schiff-base intermediate with substrate; via pyruvic acid is serine 71. Residue serine 71 is modified to Pyruvic acid (Ser); by autocatalysis. Cysteine 85 serves as the catalytic Proton donor; for catalytic activity. Catalysis depends on proton acceptor; for processing activity residues serine 234 and histidine 247.

Belongs to the eukaryotic AdoMetDC family. Pyruvate serves as cofactor. Is synthesized initially as an inactive proenzyme. Formation of the active enzyme involves a self-maturation process in which the active site pyruvoyl group is generated from an internal serine residue via an autocatalytic post-translational modification. Two non-identical subunits are generated from the proenzyme in this reaction, and the pyruvate is formed at the N-terminus of the alpha chain, which is derived from the carboxyl end of the proenzyme. The post-translation cleavage follows an unusual pathway, termed non-hydrolytic serinolysis, in which the side chain hydroxyl group of the serine supplies its oxygen atom to form the C-terminus of the beta chain, while the remainder of the serine residue undergoes an oxidative deamination to produce ammonia and the pyruvoyl group blocking the N-terminus of the alpha chain.

It carries out the reaction S-adenosyl-L-methionine + H(+) = S-adenosyl 3-(methylsulfanyl)propylamine + CO2. The protein operates within amine and polyamine biosynthesis; S-adenosylmethioninamine biosynthesis; S-adenosylmethioninamine from S-adenosyl-L-methionine: step 1/1. This Ipomoea batatas (Sweet potato) protein is S-adenosylmethionine decarboxylase proenzyme (SAMDC).